Here is a 282-residue protein sequence, read N- to C-terminus: Lipoyl synthase (282 aa).

Cys37, Cys42, Cys48, Cys63, Cys67, Cys70, and Ser275 together coordinate [4Fe-4S] cluster. The region spanning 49-264 is the Radical SAM core domain; the sequence is WSRGTATFMI…RLVGIEKGFR (216 aa).

Belongs to the radical SAM superfamily. Lipoyl synthase family. It depends on [4Fe-4S] cluster as a cofactor.

It is found in the cytoplasm. The enzyme catalyses [[Fe-S] cluster scaffold protein carrying a second [4Fe-4S](2+) cluster] + N(6)-octanoyl-L-lysyl-[protein] + 2 oxidized [2Fe-2S]-[ferredoxin] + 2 S-adenosyl-L-methionine + 4 H(+) = [[Fe-S] cluster scaffold protein] + N(6)-[(R)-dihydrolipoyl]-L-lysyl-[protein] + 4 Fe(3+) + 2 hydrogen sulfide + 2 5'-deoxyadenosine + 2 L-methionine + 2 reduced [2Fe-2S]-[ferredoxin]. It participates in protein modification; protein lipoylation via endogenous pathway; protein N(6)-(lipoyl)lysine from octanoyl-[acyl-carrier-protein]: step 2/2. Catalyzes the radical-mediated insertion of two sulfur atoms into the C-6 and C-8 positions of the octanoyl moiety bound to the lipoyl domains of lipoate-dependent enzymes, thereby converting the octanoylated domains into lipoylated derivatives. The polypeptide is Lipoyl synthase (Porphyromonas gingivalis (strain ATCC BAA-308 / W83)).